Here is a 435-residue protein sequence, read N- to C-terminus: Glutamate-1-semialdehyde 2,1-aminomutase (435 aa).

An N6-(pyridoxal phosphate)lysine modification is found at Lys-269.

This sequence belongs to the class-III pyridoxal-phosphate-dependent aminotransferase family. HemL subfamily. In terms of assembly, homodimer. The cofactor is pyridoxal 5'-phosphate.

Its subcellular location is the cytoplasm. It carries out the reaction (S)-4-amino-5-oxopentanoate = 5-aminolevulinate. It participates in porphyrin-containing compound metabolism; protoporphyrin-IX biosynthesis; 5-aminolevulinate from L-glutamyl-tRNA(Glu): step 2/2. This is Glutamate-1-semialdehyde 2,1-aminomutase from Gemmatimonas aurantiaca (strain DSM 14586 / JCM 11422 / NBRC 100505 / T-27).